We begin with the raw amino-acid sequence, 494 residues long: Glutamyl-tRNA(Gln) amidotransferase subunit A (494 aa).

Residues K79 and S159 each act as charge relay system in the active site. S183 (acyl-ester intermediate) is an active-site residue.

This sequence belongs to the amidase family. GatA subfamily. Heterotrimer of A, B and C subunits.

The enzyme catalyses L-glutamyl-tRNA(Gln) + L-glutamine + ATP + H2O = L-glutaminyl-tRNA(Gln) + L-glutamate + ADP + phosphate + H(+). Allows the formation of correctly charged Gln-tRNA(Gln) through the transamidation of misacylated Glu-tRNA(Gln) in organisms which lack glutaminyl-tRNA synthetase. The reaction takes place in the presence of glutamine and ATP through an activated gamma-phospho-Glu-tRNA(Gln). The protein is Glutamyl-tRNA(Gln) amidotransferase subunit A of Bartonella bacilliformis (strain ATCC 35685 / KC583 / Herrer 020/F12,63).